Reading from the N-terminus, the 89-residue chain is Sugar transporter SemiSWEET (89 aa).

3 consecutive transmembrane segments (helical) span residues 4 to 27, 35 to 55, and 60 to 82; these read ILLTGLFAAFFTTFAFAPQSIKTI, ISVVMYIMFLTGVISWIAYGI, and FAVLIANIVTLFLAAPVLVITLI. Residues 7–59 enclose the PQ-loop domain; it reads TGLFAAFFTTFAFAPQSIKTIRTRNTEGISVVMYIMFLTGVISWIAYGIMRSD.

As to quaternary structure, homodimer.

It is found in the cell membrane. The homodimer mediates transmembrane sugar transport down a concentration gradient. Transport is probably effected by rocking-type movements, where a cargo-binding cavity opens first on one and then on the other side of the membrane. This is Sugar transporter SemiSWEET from Escherichia coli (strain UMEA 3162-1).